The chain runs to 415 residues: Putative competence-damage inducible protein (415 aa).

This sequence belongs to the CinA family.

The protein is Putative competence-damage inducible protein of Limosilactobacillus reuteri (strain DSM 20016) (Lactobacillus reuteri).